The primary structure comprises 317 residues: Melanocyte-stimulating hormone receptor (317 aa).

The Extracellular portion of the chain corresponds to 1 to 37 (MPMQGAQRRLLGSLNSTPTATPNLGLAANHTGAPCLE). Asparagine 29 carries N-linked (GlcNAc...) asparagine glycosylation. Residues 38-63 (VSIPHGLFLSLGLVSLVENVLVVAAI) form a helical membrane-spanning segment. The Cytoplasmic segment spans residues 64–72 (AKNRNLHSP). A helical membrane pass occupies residues 73-93 (MYCFICCLALSDLLVSGSNML). Topologically, residues 94-118 (ETAVILLLEAGALATRASVVQQLQN) are extracellular. A helical transmembrane segment spans residues 119 to 140 (TIDVLTCSSMLCSLCFLGAIAV). Topologically, residues 141 to 163 (DRYVSIFYALRYHSIVTLPRARR) are cytoplasmic. Residues 164–183 (AIAAIWVASVLSSTLFIAYC) form a helical membrane-spanning segment. Residues 184-191 (DHAAVLLC) lie on the Extracellular side of the membrane. A helical membrane pass occupies residues 192 to 211 (LVVFFLAMLVLMAVLYVHML). Topologically, residues 212 to 240 (ARACQHAQGITRLHKRQLPAHQGFGLRGA) are cytoplasmic. A helical transmembrane segment spans residues 241–266 (ATLTILLGIFFLCWGPFFLHLMLVVL). Over 267-279 (CPQHLTCSCIFKN) the chain is Extracellular. The chain crosses the membrane as a helical span at residues 280–300 (FKVFLTLIICNTIIDPLIYAF). At 301-317 (RSQELCRTLKEVLLCSW) the chain is on the cytoplasmic side. Residue cysteine 315 is the site of S-palmitoyl cysteine attachment.

This sequence belongs to the G-protein coupled receptor 1 family. As to quaternary structure, interacts with MGRN1, but does not undergo MGRN1-mediated ubiquitination; this interaction competes with GNAS-binding and thus inhibits agonist-induced cAMP production. Interacts with OPN3; the interaction results in a decrease in MC1R-mediated cAMP signaling and ultimately a decrease in melanin production in melanocytes.

Its subcellular location is the cell membrane. Receptor for MSH (alpha, beta and gamma) and ACTH. The activity of this receptor is mediated by G proteins which activate adenylate cyclase. Mediates melanogenesis, the production of eumelanin (black/brown) and phaeomelanin (red/yellow), via regulation of cAMP signaling in melanocytes. This Alouatta caraya (Black howler monkey) protein is Melanocyte-stimulating hormone receptor (MC1R).